Consider the following 566-residue polypeptide: Proline--tRNA ligase (566 aa).

This sequence belongs to the class-II aminoacyl-tRNA synthetase family. ProS type 1 subfamily. Homodimer.

The protein localises to the cytoplasm. It catalyses the reaction tRNA(Pro) + L-proline + ATP = L-prolyl-tRNA(Pro) + AMP + diphosphate. Functionally, catalyzes the attachment of proline to tRNA(Pro) in a two-step reaction: proline is first activated by ATP to form Pro-AMP and then transferred to the acceptor end of tRNA(Pro). As ProRS can inadvertently accommodate and process non-cognate amino acids such as alanine and cysteine, to avoid such errors it has two additional distinct editing activities against alanine. One activity is designated as 'pretransfer' editing and involves the tRNA(Pro)-independent hydrolysis of activated Ala-AMP. The other activity is designated 'posttransfer' editing and involves deacylation of mischarged Ala-tRNA(Pro). The misacylated Cys-tRNA(Pro) is not edited by ProRS. This chain is Proline--tRNA ligase, found in Bacillus cereus (strain B4264).